The sequence spans 572 residues: uncharacterized protein (572 aa).

A disordered region spans residues Ala543–Asn572. Residues Ser547 to Thr563 are compositionally biased toward low complexity.

This is an uncharacterized protein from Acanthamoeba polyphaga (Amoeba).